Reading from the N-terminus, the 188-residue chain is ATP-dependent protease subunit HslV (188 aa).

Residue Thr14 is part of the active site. Na(+) contacts are provided by Ala173, Cys176, and Thr179.

This sequence belongs to the peptidase T1B family. HslV subfamily. A double ring-shaped homohexamer of HslV is capped on each side by a ring-shaped HslU homohexamer. The assembly of the HslU/HslV complex is dependent on binding of ATP.

It is found in the cytoplasm. The catalysed reaction is ATP-dependent cleavage of peptide bonds with broad specificity.. With respect to regulation, allosterically activated by HslU binding. Protease subunit of a proteasome-like degradation complex believed to be a general protein degrading machinery. The protein is ATP-dependent protease subunit HslV of Caulobacter vibrioides (strain ATCC 19089 / CIP 103742 / CB 15) (Caulobacter crescentus).